Here is a 400-residue protein sequence, read N- to C-terminus: Lysophospholipid transporter LplT (400 aa).

A run of 12 helical transmembrane segments spans residues 19-39, 53-73, 91-111, 139-159, 164-184, 195-213, 227-247, 257-277, 281-301, 304-324, 352-372, and 373-393; these read VIVAQFLSAFGDNALLFATLA, VLQMVFVGAYILFAPFVGQIA, AGAAGICLGVNPFVGYTLVGI, LMEASTIAAILLGSVAGGVLA, IAALVACALAYAGAVAANLFI, SWRLSAMTRSFFSACVVLW, LFWGAGVTLRFLLVLWVPVAL, YLNAMVAVGIVVGAGAAAKLV, TVSRCMPAGILIGVVVAIFSL, ALLPAYALLLLIGMLGGFFVV, NSAMLLMLGLYSLAVLVGVPA, and VAIGIGFGVLFALAIAALWIW.

It belongs to the major facilitator superfamily. LplT (TC 2.A.1.42) family.

Its subcellular location is the cell inner membrane. Catalyzes the facilitated diffusion of 2-acyl-glycero-3-phosphoethanolamine (2-acyl-GPE) into the cell. The protein is Lysophospholipid transporter LplT of Salmonella heidelberg (strain SL476).